Consider the following 138-residue polypeptide: Putative pre-16S rRNA nuclease (138 aa).

Belongs to the YqgF nuclease family.

Its subcellular location is the cytoplasm. Its function is as follows. Could be a nuclease involved in processing of the 5'-end of pre-16S rRNA. The polypeptide is Putative pre-16S rRNA nuclease (Salmonella arizonae (strain ATCC BAA-731 / CDC346-86 / RSK2980)).